The chain runs to 154 residues: Prefoldin subunit 5 (154 aa).

N-acetylalanine is present on Ala2. At Lys42 the chain carries N6-acetyllysine. A Phosphoserine modification is found at Ser56.

This sequence belongs to the prefoldin subunit alpha family. Heterohexamer of two PFD-alpha type and four PFD-beta type subunits.

The protein resides in the nucleus. Its function is as follows. Binds specifically to cytosolic chaperonin (c-CPN) and transfers target proteins to it. Binds to nascent polypeptide chain and promotes folding in an environment in which there are many competing pathways for nonnative proteins. Represses the transcriptional activity of MYC. This chain is Prefoldin subunit 5 (Pfdn5), found in Mus musculus (Mouse).